An 89-amino-acid polypeptide reads, in one-letter code: U1-hexatoxin-Iw1e (89 aa).

The N-terminal stretch at 1 to 18 is a signal peptide; sequence MLKFVVLIFVVIMASTFA. 5 disulfides stabilise this stretch: C21-C32, C26-C40, C31-C66, C50-C74, and C68-C81. Residues 87–89 constitute a propeptide that is removed on maturation; the sequence is RSE.

It belongs to the MIT-like AcTx family. As to expression, expressed by the venom gland.

The protein resides in the secreted. In Illawarra wisharti (Illawarra funnel-web spider), this protein is U1-hexatoxin-Iw1e.